Here is a 472-residue protein sequence, read N- to C-terminus: 3-isopropylmalate dehydratase large subunit (472 aa).

Residues Cys347, Cys407, and Cys410 each coordinate [4Fe-4S] cluster.

Belongs to the aconitase/IPM isomerase family. LeuC type 1 subfamily. Heterodimer of LeuC and LeuD. The cofactor is [4Fe-4S] cluster.

It catalyses the reaction (2R,3S)-3-isopropylmalate = (2S)-2-isopropylmalate. Its pathway is amino-acid biosynthesis; L-leucine biosynthesis; L-leucine from 3-methyl-2-oxobutanoate: step 2/4. Functionally, catalyzes the isomerization between 2-isopropylmalate and 3-isopropylmalate, via the formation of 2-isopropylmaleate. The protein is 3-isopropylmalate dehydratase large subunit of Bacillus velezensis (strain DSM 23117 / BGSC 10A6 / LMG 26770 / FZB42) (Bacillus amyloliquefaciens subsp. plantarum).